We begin with the raw amino-acid sequence, 189 residues long: MLKLIVGLGNPGEQYQKTRHNAGFWLLDQTAQDYSCRLRTEKKFFAEFGEIAINQQKIFLLKPQTFMNASGKSLAAVCRFYHIEPQQILIIHDELDLPEGKIKLKKSGGHGGHNGLRDIIAALASQDFYRLRIGIGRPENSTQVIDYVLKAPSATHMERLNESLSYGKKAIEKLITEGDEKAMHWLHSL.

Tyrosine 15 is a binding site for tRNA. The Proton acceptor role is filled by histidine 20. TRNA-binding residues include phenylalanine 66, asparagine 68, and asparagine 114.

This sequence belongs to the PTH family. In terms of assembly, monomer.

The protein resides in the cytoplasm. It carries out the reaction an N-acyl-L-alpha-aminoacyl-tRNA + H2O = an N-acyl-L-amino acid + a tRNA + H(+). Its function is as follows. Hydrolyzes ribosome-free peptidyl-tRNAs (with 1 or more amino acids incorporated), which drop off the ribosome during protein synthesis, or as a result of ribosome stalling. In terms of biological role, catalyzes the release of premature peptidyl moieties from peptidyl-tRNA molecules trapped in stalled 50S ribosomal subunits, and thus maintains levels of free tRNAs and 50S ribosomes. In Dichelobacter nodosus (strain VCS1703A), this protein is Peptidyl-tRNA hydrolase.